The following is a 498-amino-acid chain: Glutamate--tRNA ligase (498 aa).

A 'HIGH' region motif is present at residues 11-21 (PSPTGHLHIGN). The 'KMSKS' region motif lies at 260–264 (KLSKR). Residue Lys263 participates in ATP binding.

It belongs to the class-I aminoacyl-tRNA synthetase family. Glutamate--tRNA ligase type 1 subfamily. Monomer.

It localises to the cytoplasm. The enzyme catalyses tRNA(Glu) + L-glutamate + ATP = L-glutamyl-tRNA(Glu) + AMP + diphosphate. Catalyzes the attachment of glutamate to tRNA(Glu) in a two-step reaction: glutamate is first activated by ATP to form Glu-AMP and then transferred to the acceptor end of tRNA(Glu). This chain is Glutamate--tRNA ligase, found in Leuconostoc mesenteroides subsp. mesenteroides (strain ATCC 8293 / DSM 20343 / BCRC 11652 / CCM 1803 / JCM 6124 / NCDO 523 / NBRC 100496 / NCIMB 8023 / NCTC 12954 / NRRL B-1118 / 37Y).